Consider the following 886-residue polypeptide: DNA mismatch repair protein MutS (886 aa).

Residue 627–634 (GPNMGGKS) participates in ATP binding. Residues 834-857 (VECADAPAPSDATHPALDRLRDID) form a disordered region.

The protein belongs to the DNA mismatch repair MutS family.

Functionally, this protein is involved in the repair of mismatches in DNA. It is possible that it carries out the mismatch recognition step. This protein has a weak ATPase activity. The chain is DNA mismatch repair protein MutS from Burkholderia vietnamiensis (strain G4 / LMG 22486) (Burkholderia cepacia (strain R1808)).